The primary structure comprises 487 residues: Cysteine--tRNA ligase (487 aa).

Cysteine 29 serves as a coordination point for Zn(2+). The 'HIGH' region motif lies at 31–41 (VTVYDVNHVGH). Positions 209, 234, and 238 each coordinate Zn(2+). A 'KMSKS' region motif is present at residues 266–270 (KMSKS). Lysine 269 is an ATP binding site.

It belongs to the class-I aminoacyl-tRNA synthetase family. As to quaternary structure, monomer. It depends on Zn(2+) as a cofactor.

It is found in the cytoplasm. It carries out the reaction tRNA(Cys) + L-cysteine + ATP = L-cysteinyl-tRNA(Cys) + AMP + diphosphate. This chain is Cysteine--tRNA ligase, found in Persephonella marina (strain DSM 14350 / EX-H1).